We begin with the raw amino-acid sequence, 983 residues long: Nuclear factor NF-kappa-B p105 subunit (983 aa).

Positions 47–372 (PYLQIIEQPK…EVQRKRQKLM (326 aa)) constitute an RHD domain. S-nitrosocysteine is present on Cys66. Ser342 is modified (phosphoserine; by PKA). The Nuclear localization signal signature appears at 365–370 (QRKRQK). A GRR region spans residues 377–397 (DGYGGGSGAGGGGMFGGGGGG). The segment at 423–454 (KSNAGMKHELSNSTVKKDEESSDKQSDKWDTK) is disordered. Positions 428–454 (MKHELSNSTVKKDEESSDKQSDKWDTK) are enriched in basic and acidic residues. 7 ANK repeats span residues 540-569 (NGDN…DMNY), 579-608 (LYQT…NVNL), 612-641 (HGNS…ASSM), 648-677 (EGLS…DVNA), 682-712 (SGRT…DVDS), 716-745 (DGTT…DPHV), and 769-799 (PGTT…AVSE). One can recognise a Death domain in the interval 804–891 (QGPLRELNES…EAIEVIQKAL (88 aa)). Ser938 is modified (phosphoserine).

In terms of assembly, active NF-kappa-B is a heterodimer of an about 50 kDa DNA-binding subunit and the weak DNA-binding subunit p65. Two heterodimers might form a labile tetramer. In terms of processing, generation of the NF-kappa-B p50 (Nuclear factor NF-kappa-B p50 subunit) transcription factor takes place both cotranslationally and post-translationally via non-mutually exclusive mechanisms. A cotranslational processing allows the production of both p50 and p105 (Nuclear factor NF-kappa-B p105 subunit) from a single NFKB1 mRNA. While translation occurs, the particular unfolded structure after the GRR repeat region acts as a substrate for the proteasome, promoting degradation of the C-terminus. The GRR acts as a proteasomal 'stop signal', protecting the region upstream of the GRR from degradation and promoting generation of p50. It is unclear if limited proteasome degradation during cotranslational processing depends on ubiquitination. NF-kappa-B p50 is also generated post-translationally following ubiquitination by the KPC complex, leading to limited processing by the proteasome downstream of the GRR region, thereby generating p50. Phosphorylation at the C-terminus by IKBKB/IKKB acts as a signal for ubiquitination and promotes either complete degradation or processing to generate the NF-kappa-B p50 (Nuclear factor NF-kappa-B p50 subunit). Phosphorylation at Ser-938 are required for BTRC/BTRCP-mediated ubiquitination and proteolysis. Phosphorylation at Ser-938 is also required for ubiquitination by the KPC complex and limited processing to generate NF-kappa-B p50 (Nuclear factor NF-kappa-B p50 subunit). Post-translationally, polyubiquitinated at multiple Lys residues in the C-terminus. Polyubiquitinated by the SCF(FBXW11) and SCF(BTRC) complexes following phosphorylation at Ser-938, leading to its complete degradation. In contrast, polyubiquitination by the KPC complex following phosphorylation at Ser-938 leads to limited proteosomal processing and generation of the active NF-kappa-B p50 (Nuclear factor NF-kappa-B p50 subunit). In terms of processing, S-nitrosylation of Cys-66 affects DNA binding. The covalent modification of cysteine by 15-deoxy-Delta12,14-prostaglandin-J2 is autocatalytic and reversible. It may occur as an alternative to other cysteine modifications, such as S-nitrosylation and S-palmitoylation.

Its subcellular location is the cytoplasm. It is found in the nucleus. P105 is the precursor of the active p50 subunit (Nuclear factor NF-kappa-B p50 subunit) of the nuclear factor NF-kappa-B. The precursor protein itself does not bind to DNA. Acts as a cytoplasmic retention of attached NF-kappa-B proteins by p105. Its function is as follows. Constitutes the active form, which associates with RELA/p65 to form the NF-kappa-B p65-p50 complex to form a transcription factor. Together with RELA/p65, binds to the kappa-B consensus sequence 5'-GGRNNYYCC-3', located in the enhancer region of genes involved in immune response and acute phase reactions. The polypeptide is Nuclear factor NF-kappa-B p105 subunit (NFKB1) (Gallus gallus (Chicken)).